Here is a 201-residue protein sequence, read N- to C-terminus: Recombination protein RecR (201 aa).

A C4-type zinc finger spans residues 60–75 (CETCGNIDTRSPCTIC). The region spanning 83-178 (SIIVVVADVA…KVTRLAHGVP (96 aa)) is the Toprim domain.

Belongs to the RecR family.

May play a role in DNA repair. It seems to be involved in an RecBC-independent recombinational process of DNA repair. It may act with RecF and RecO. In Nitrobacter winogradskyi (strain ATCC 25391 / DSM 10237 / CIP 104748 / NCIMB 11846 / Nb-255), this protein is Recombination protein RecR.